We begin with the raw amino-acid sequence, 251 residues long: NADPH-dependent oxidoreductase (251 aa).

The protein belongs to the flavin oxidoreductase frp family. FMN is required as a cofactor.

Functionally, reduces FMN, organic nitro compounds and disulfide DTNB. Involved in maintenance of the cellular redox state and the disulfide stress response. This Staphylococcus aureus (strain MRSA252) protein is NADPH-dependent oxidoreductase (nfrA).